Consider the following 189-residue polypeptide: MRRQLLPALTMLLVFTVITGIVYPLAVTGVGQLFFGDQANGALLERDGQVIGSAHIGQQFTAAKYFHPRPSSAGDGYDAAASSGSNLGPTNEKLLAAVAERVTAYRKENNLPADTLVPVDAVTGSGSGLDPAISVVNAKLQAPRVAQARNISIRQVERLIEDHTDARGLGFLGERAVNVLRLNLALDRL.

Residues 5-25 (LLPALTMLLVFTVITGIVYPL) traverse the membrane as a helical segment.

It belongs to the KdpC family. In terms of assembly, the system is composed of three essential subunits: KdpA, KdpB and KdpC.

The protein localises to the cell membrane. Its function is as follows. Part of the high-affinity ATP-driven potassium transport (or Kdp) system, which catalyzes the hydrolysis of ATP coupled with the electrogenic transport of potassium into the cytoplasm. This subunit acts as a catalytic chaperone that increases the ATP-binding affinity of the ATP-hydrolyzing subunit KdpB by the formation of a transient KdpB/KdpC/ATP ternary complex. The sequence is that of Potassium-transporting ATPase KdpC subunit from Mycobacterium bovis (strain ATCC BAA-935 / AF2122/97).